A 374-amino-acid polypeptide reads, in one-letter code: Putative glutamate--cysteine ligase 2 (374 aa).

This sequence belongs to the glutamate--cysteine ligase type 2 family. YbdK subfamily.

The enzyme catalyses L-cysteine + L-glutamate + ATP = gamma-L-glutamyl-L-cysteine + ADP + phosphate + H(+). Functionally, ATP-dependent carboxylate-amine ligase which exhibits weak glutamate--cysteine ligase activity. This Paracidovorax citrulli (strain AAC00-1) (Acidovorax citrulli) protein is Putative glutamate--cysteine ligase 2.